The following is a 130-amino-acid chain: Small ribosomal subunit protein uS8 (130 aa).

Belongs to the universal ribosomal protein uS8 family. As to quaternary structure, part of the 30S ribosomal subunit. Contacts proteins S5 and S12.

Functionally, one of the primary rRNA binding proteins, it binds directly to 16S rRNA central domain where it helps coordinate assembly of the platform of the 30S subunit. The polypeptide is Small ribosomal subunit protein uS8 (Pectobacterium carotovorum subsp. carotovorum (strain PC1)).